Reading from the N-terminus, the 260-residue chain is UPF0246 protein BceJ2315_22780 (260 aa).

The protein belongs to the UPF0246 family.

The chain is UPF0246 protein BceJ2315_22780 from Burkholderia cenocepacia (strain ATCC BAA-245 / DSM 16553 / LMG 16656 / NCTC 13227 / J2315 / CF5610) (Burkholderia cepacia (strain J2315)).